Here is a 368-residue protein sequence, read N- to C-terminus: Histidinol-phosphate aminotransferase (368 aa).

Position 228 is an N6-(pyridoxal phosphate)lysine (lysine 228).

The protein belongs to the class-II pyridoxal-phosphate-dependent aminotransferase family. Histidinol-phosphate aminotransferase subfamily. As to quaternary structure, homodimer. The cofactor is pyridoxal 5'-phosphate.

The catalysed reaction is L-histidinol phosphate + 2-oxoglutarate = 3-(imidazol-4-yl)-2-oxopropyl phosphate + L-glutamate. Its pathway is amino-acid biosynthesis; L-histidine biosynthesis; L-histidine from 5-phospho-alpha-D-ribose 1-diphosphate: step 7/9. The protein is Histidinol-phosphate aminotransferase (hisC) of Methylobacillus flagellatus.